A 310-amino-acid polypeptide reads, in one-letter code: Aspartate carbamoyltransferase catalytic subunit 2 (310 aa).

Carbamoyl phosphate is bound by residues Arg55 and Thr56. Lys85 contributes to the L-aspartate binding site. Carbamoyl phosphate-binding residues include Arg106, His134, and Gln137. L-aspartate is bound by residues Arg167 and Arg228. Carbamoyl phosphate-binding residues include Leu266 and Pro267.

Belongs to the aspartate/ornithine carbamoyltransferase superfamily. ATCase family. As to quaternary structure, heterododecamer (2C3:3R2) of six catalytic PyrB chains organized as two trimers (C3), and six regulatory PyrI chains organized as three dimers (R2).

The catalysed reaction is carbamoyl phosphate + L-aspartate = N-carbamoyl-L-aspartate + phosphate + H(+). The protein operates within pyrimidine metabolism; UMP biosynthesis via de novo pathway; (S)-dihydroorotate from bicarbonate: step 2/3. Its function is as follows. Catalyzes the condensation of carbamoyl phosphate and aspartate to form carbamoyl aspartate and inorganic phosphate, the committed step in the de novo pyrimidine nucleotide biosynthesis pathway. This is Aspartate carbamoyltransferase catalytic subunit 2 from Shewanella halifaxensis (strain HAW-EB4).